The sequence spans 508 residues: Photosystem II CP47 reaction center protein (508 aa).

6 helical membrane passes run 21 to 36, 101 to 115, 140 to 156, 203 to 218, 237 to 252, and 457 to 472; these read SVHI…WAGS, IAFS…IWHW, GIHL…FGAF, IAAG…FHLS, VLSS…AFVV, and SFAL…HGAR.

Belongs to the PsbB/PsbC family. PsbB subfamily. In terms of assembly, PSII is composed of 1 copy each of membrane proteins PsbA, PsbB, PsbC, PsbD, PsbE, PsbF, PsbH, PsbI, PsbJ, PsbK, PsbL, PsbM, PsbT, PsbX, PsbY, PsbZ, Psb30/Ycf12, at least 3 peripheral proteins of the oxygen-evolving complex and a large number of cofactors. It forms dimeric complexes. It depends on Binds multiple chlorophylls. PSII binds additional chlorophylls, carotenoids and specific lipids. as a cofactor.

It localises to the plastid membrane. One of the components of the core complex of photosystem II (PSII). It binds chlorophyll and helps catalyze the primary light-induced photochemical processes of PSII. PSII is a light-driven water:plastoquinone oxidoreductase, using light energy to abstract electrons from H(2)O, generating O(2) and a proton gradient subsequently used for ATP formation. The sequence is that of Photosystem II CP47 reaction center protein from Cuscuta reflexa (Southern Asian dodder).